Here is a 185-residue protein sequence, read N- to C-terminus: Large ribosomal subunit protein bL25 (185 aa).

The protein belongs to the bacterial ribosomal protein bL25 family. CTC subfamily. Part of the 50S ribosomal subunit; part of the 5S rRNA/L5/L18/L25 subcomplex. Contacts the 5S rRNA. Binds to the 5S rRNA independently of L5 and L18.

This is one of the proteins that binds to the 5S RNA in the ribosome where it forms part of the central protuberance. This chain is Large ribosomal subunit protein bL25, found in Chlamydia pneumoniae (Chlamydophila pneumoniae).